Reading from the N-terminus, the 342-residue chain is Anthranilate phosphoribosyltransferase (342 aa).

5-phospho-alpha-D-ribose 1-diphosphate-binding positions include glycine 81, 84 to 85 (GD), 91 to 94 (NVSS), 109 to 117 (KHGNRGVSS), and serine 121. Glycine 81 lines the anthranilate pocket. Serine 93 contributes to the Mg(2+) binding site. Asparagine 112 provides a ligand contact to anthranilate. Arginine 167 contributes to the anthranilate binding site. Residues aspartate 226 and glutamate 227 each coordinate Mg(2+).

The protein belongs to the anthranilate phosphoribosyltransferase family. In terms of assembly, homodimer. Mg(2+) is required as a cofactor.

The catalysed reaction is N-(5-phospho-beta-D-ribosyl)anthranilate + diphosphate = 5-phospho-alpha-D-ribose 1-diphosphate + anthranilate. The protein operates within amino-acid biosynthesis; L-tryptophan biosynthesis; L-tryptophan from chorismate: step 2/5. In terms of biological role, catalyzes the transfer of the phosphoribosyl group of 5-phosphorylribose-1-pyrophosphate (PRPP) to anthranilate to yield N-(5'-phosphoribosyl)-anthranilate (PRA). The protein is Anthranilate phosphoribosyltransferase of Marinobacter nauticus (strain ATCC 700491 / DSM 11845 / VT8) (Marinobacter aquaeolei).